Reading from the N-terminus, the 138-residue chain is Venom allergen 2 (138 aa).

Residues 1–19 (MKSFVLATCLLGFAQIIYA) form the signal peptide. Cystine bridges form between Cys34–Cys57, Cys81–Cys94, and Cys101–Cys122.

The protein belongs to the ant venom allergen 2/4 family. In terms of assembly, homodimer; disulfide-linked. Expressed by the venom gland.

It localises to the secreted. The polypeptide is Venom allergen 2 (Solenopsis invicta (Red imported fire ant)).